Reading from the N-terminus, the 219-residue chain is MSHYRQRFLQLALDSNALCFGEFTLKSGRISPYFFNAGHFNSGAKTAALAQCYADAIDAANMNFDLVFGPAYKGIPLATALACEYARRERDLLLTFNRKEVKNHGEGGTLIGAPLNGRKILIIDDVITAGTAIREALRIIRNAGGTPTGIAVALNRQEIASETNRQSSVQALMAETGIPVVAIATLSDLLAFVEENASLAKFYEPLLAYKTHYGTEASD.

Lysine 26 contacts 5-phospho-alpha-D-ribose 1-diphosphate. Position 34–35 (phenylalanine 34–phenylalanine 35) interacts with orotate. 5-phospho-alpha-D-ribose 1-diphosphate contacts are provided by residues tyrosine 72 to lysine 73, arginine 98, lysine 99, lysine 102, histidine 104, and aspartate 124 to alanine 132. Orotate-binding residues include threonine 128 and arginine 156.

It belongs to the purine/pyrimidine phosphoribosyltransferase family. PyrE subfamily. In terms of assembly, homodimer. Mg(2+) is required as a cofactor.

The catalysed reaction is orotidine 5'-phosphate + diphosphate = orotate + 5-phospho-alpha-D-ribose 1-diphosphate. It functions in the pathway pyrimidine metabolism; UMP biosynthesis via de novo pathway; UMP from orotate: step 1/2. Functionally, catalyzes the transfer of a ribosyl phosphate group from 5-phosphoribose 1-diphosphate to orotate, leading to the formation of orotidine monophosphate (OMP). The sequence is that of Orotate phosphoribosyltransferase from Xylella fastidiosa (strain M23).